A 523-amino-acid chain; its full sequence is Peptide chain release factor 3 (523 aa).

The 268-residue stretch at Lys-8–His-275 folds into the tr-type G domain. GTP contacts are provided by residues Ser-17–Thr-24, Asp-85–His-89, and Asn-139–Asp-142.

It belongs to the TRAFAC class translation factor GTPase superfamily. Classic translation factor GTPase family. PrfC subfamily.

It is found in the cytoplasm. In terms of biological role, increases the formation of ribosomal termination complexes and stimulates activities of RF-1 and RF-2. It binds guanine nucleotides and has strong preference for UGA stop codons. It may interact directly with the ribosome. The stimulation of RF-1 and RF-2 is significantly reduced by GTP and GDP, but not by GMP. The polypeptide is Peptide chain release factor 3 (Lactococcus lactis subsp. cremoris (strain SK11)).